An 86-amino-acid polypeptide reads, in one-letter code: Large ribosomal subunit protein bL31 (86 aa).

The disordered stretch occupies residues 65 to 86 (YRMASSDSSEQKDKSSEEKKES). Residues 73 to 86 (SEQKDKSSEEKKES) show a composition bias toward basic and acidic residues.

This sequence belongs to the bacterial ribosomal protein bL31 family. Type A subfamily. In terms of assembly, part of the 50S ribosomal subunit.

Binds the 23S rRNA. The chain is Large ribosomal subunit protein bL31 from Prochlorococcus marinus (strain NATL1A).